A 179-amino-acid chain; its full sequence is Cellular nucleic acid-binding protein homolog (179 aa).

7 CCHC-type zinc fingers span residues 17–34 (PRCY…ECTK), 36–53 (SICY…ECTE), 58–75 (KTCY…DCPS), 83–100 (AECY…DCRT), 116–133 (MNCY…DCTM), 135–152 (VKCY…ECQQ), and 157–174 (QLCY…NCTS).

It to human CNBP and to retroviral nucleic acid binding proteins (NBP). Post-translationally, phosphorylated.

It is found in the nucleus. Functionally, acts in the sexual differentiation pathway. Is required for efficient conjugation. Double-stranded DNA-binding protein. The chain is Cellular nucleic acid-binding protein homolog (byr3) from Schizosaccharomyces pombe (strain 972 / ATCC 24843) (Fission yeast).